We begin with the raw amino-acid sequence, 682 residues long: tRNA(Met) cytidine acetyltransferase TmcA (682 aa).

ATP-binding positions include glutamine 176, 198 to 207 (GRGKSTLAGM), and arginine 320. Positions 357 to 534 (QQQWIQQPEL…SGCYTAMAIF (178 aa)) constitute an N-acetyltransferase domain. Residues 462–464 (VAV) and glutamate 502 each bind acetyl-CoA.

This sequence belongs to the RNA cytidine acetyltransferase family. TmcA subfamily.

The protein localises to the cytoplasm. The enzyme catalyses cytidine(34) in elongator tRNA(Met) + acetyl-CoA + ATP + H2O = N(4)-acetylcytidine(34) in elongator tRNA(Met) + ADP + phosphate + CoA + H(+). Its function is as follows. Catalyzes the formation of N(4)-acetylcytidine (ac(4)C) at the wobble position of tRNA(Met), by using acetyl-CoA as an acetyl donor and ATP (or GTP). This is tRNA(Met) cytidine acetyltransferase TmcA from Photorhabdus asymbiotica subsp. asymbiotica (strain ATCC 43949 / 3105-77) (Xenorhabdus luminescens (strain 2)).